The chain runs to 71 residues: Translation initiation factor IF-1 (71 aa).

The region spanning 1–71 (MSKDDLIQFT…LTKGRVIHRH (71 aa)) is the S1-like domain.

It belongs to the IF-1 family. In terms of assembly, component of the 30S ribosomal translation pre-initiation complex which assembles on the 30S ribosome in the order IF-2 and IF-3, IF-1 and N-formylmethionyl-tRNA(fMet); mRNA recruitment can occur at any time during PIC assembly.

It localises to the cytoplasm. Its function is as follows. One of the essential components for the initiation of protein synthesis. Stabilizes the binding of IF-2 and IF-3 on the 30S subunit to which N-formylmethionyl-tRNA(fMet) subsequently binds. Helps modulate mRNA selection, yielding the 30S pre-initiation complex (PIC). Upon addition of the 50S ribosomal subunit IF-1, IF-2 and IF-3 are released leaving the mature 70S translation initiation complex. The polypeptide is Translation initiation factor IF-1 (Rickettsia canadensis (strain McKiel)).